Consider the following 2094-residue polypeptide: Nuclear mitotic apparatus protein 1 (2094 aa).

Residues 1–210 (MTLHATRAAT…SPMGDILQTP (210 aa)) form a head (Globular) region. The residue at position 160 (serine 160) is a Phosphoserine. Position 161 is a phosphothreonine (threonine 161). Residues serine 167 and serine 201 each carry the phosphoserine modification. At threonine 209 the chain carries Phosphothreonine. Residues 211 to 1681 (QFQMRRLKKQ…ADQQLRDLGK (1471 aa)) adopt a coiled-coil conformation. Position 269 is a phosphoserine (serine 269). Lysine 377 carries the N6-acetyllysine modification. Residues serine 386 and serine 398 each carry the phosphoserine modification. Lysine 443 carries the N6-acetyllysine modification. Disordered stretches follow at residues 617 to 636 (QLQAANDARDNAQTSVTQAQ) and 723 to 759 (LKEQQCRATEMEAESRSLMEQREREQKELEQEKAGRK). Polar residues predominate over residues 627-636 (NAQTSVTQAQ). Position 878 is an N6-acetyllysine (lysine 878). Disordered regions lie at residues 921–1000 (SLEL…TQER), 1081–1143 (LVKK…EGLT), and 1173–1223 (ELGH…SSLI). Residues 935-951 (ASDQLGEQQGRPFSSTH) are compositionally biased toward polar residues. Basic and acidic residues-rich tracts occupy residues 956–972 (AMEREAEQMGGELERLR) and 983–998 (QEERGQQEREVARLTQ). A Phosphoserine modification is found at serine 1183. Positions 1194 to 1206 (KAQDHSKAEEEWK) are enriched in basic and acidic residues. A Phosphoserine modification is found at serine 1221. Position 1507 is an N6-acetyllysine (lysine 1507). Serine 1583 bears the Phosphoserine mark. Lysine 1681 participates in a covalent cross-link: Glycyl lysine isopeptide (Lys-Gly) (interchain with G-Cter in SUMO2). Residues 1681 to 1858 (KFQVATDALK…NSALLSLPGY (178 aa)) are membrane-binding domain 1. The tail (Globular) stretch occupies residues 1682–2094 (FQVATDALKS…TPRAKGKVKH (413 aa)). Residues serine 1703, serine 1706, and serine 1710 each carry the phosphoserine modification. A disordered region spans residues 1718–1743 (SVASKLPRTQPDGTSVPGEPASPISQ). The short motif at 1724–1730 (PRTQPDG) is the Tankyrase-binding domain element. A phosphoserine mark is found at serine 1739 and serine 1742. Lysine 1748 is covalently cross-linked (Glycyl lysine isopeptide (Lys-Gly) (interchain with G-Cter in SUMO1); alternate). Residue lysine 1748 forms a Glycyl lysine isopeptide (Lys-Gly) (interchain with G-Cter in SUMO2); alternate linkage. Serine 1751 is subject to Phosphoserine. Serine 1754 is subject to Phosphoserine; by PLK1. Tyrosine 1756 is modified (phosphotyrosine). Threonine 1758 carries the post-translational modification Phosphothreonine. Residues 1760–1795 (TPARGQAPLETSLDSLGDAFPDSGRKTRSARRRTTQ) are disordered. A 4.1-binding domain region spans residues 1770–1792 (TSLDSLGDAFPDSGRKTRSARRR). Serine 1771 is modified (phosphoserine; by PLK1). Phosphoserine is present on residues serine 1774 and serine 1782. Threonine 1786 bears the Phosphothreonine mark. Lysine 1804 is covalently cross-linked (Glycyl lysine isopeptide (Lys-Gly) (interchain with G-Cter in SUMO2)). Disordered stretches follow at residues 1807–1883 (LEEP…GRNS) and 1937–2094 (EMKT…KVKH). Residues serine 1812 and serine 1815 each carry the phosphoserine modification. Over residues 1812 to 1839 (SANSSFYSTQSAPASQANLRATSSTQSL) the composition is skewed to polar residues. Serine 1816 is modified (phosphoserine; by PLK1). Phosphotyrosine is present on tyrosine 1818. Phosphoserine is present on serine 1822. Serine 1826 is subject to Phosphoserine; alternate. O-linked (GlcNAc) serine; alternate glycosylation occurs at serine 1826. Residues serine 1844 and serine 1869 each carry the phosphoserine modification. The tubulin-binding domain stretch occupies residues 1864 to 1967 (SSARRSQARM…AEGVGITTRQ (104 aa)). The tract at residues 1874 to 1908 (SSGAPQGRNSFYMGTCQDEPEQLDDWNRIAELQQR) is GPSM2-binding domain. The segment covering 1937–1948 (EMKTGDPRETLR) has biased composition (basic and acidic residues). At serine 1951 the chain carries Phosphoserine. The interval 1963–2042 (ITTRQQRKRV…SILNTPKKLG (80 aa)) is membrane-binding domain 2. The Nuclear localization signal signature appears at 1966–1971 (RQQRKR). Residues serine 1973 and serine 1974 each carry the phosphoserine modification. Residue threonine 1982 is modified to Phosphothreonine. Residue serine 1985 is modified to Phosphoserine. The residue at position 1997 (threonine 1997) is a Phosphothreonine; by CDK1. Residues 1997–2006 (TPRDRHEGRK) show a composition bias toward basic and acidic residues. The residue at position 2029 (serine 2029) is a Phosphoserine. Position 2037 is a phosphothreonine (threonine 2037). 2 positions are modified to phosphoserine: serine 2044 and serine 2059. The residue at position 2069 (serine 2069) is a Phosphoserine; by CDK1. Residues 2073–2085 (ATTTTGTATVATT) are compositionally biased toward low complexity. Residue threonine 2085 is modified to Phosphothreonine; by CDK1.

As to quaternary structure, homodimer. Also forms multiarm oligomers by association of C-terminal tail domains, oligomers may further assemble to form a hexagonal nuclear lattice-like network. Associates with the dynein-dynactin complex; this association promotes the transport and accumulation of NUMA1 at the mitotic spindle poles that is inhibited by the BRISC complex in a PLK1-dependent manner. Part of a spindle orientation complex at least composed of GNAI1, GPSM2 and NUMA1. Interacts (via C-terminus) with microtubules (MTs); this interaction is direct and promotes both MT bundle formation and stability in a dynein-dynactin complex- and CDK1-independent manner. Interacts with EPB41 and EPB41L2; these interactions are negatively regulated by CDK1 during metaphase and are important for anaphase-specific localization of NUMA1 in symmetrically dividing cells. Interacts (via C-terminus) with GPSM2 (via TPR repeats); this interaction is direct, prevented by competitive binding of INSC, is inhibited in a PLK1-dependent manner, blocks the association of NUMA1 with MTs and inhibits NUMA1-induced MT bundle formation, prevents the association of NUMA1 with SPAG5, induces mitotic spindle pole localization of GPSM2, both metaphase cell cortex localization of NUMA1 and mitotic spindle organization. Does not interact with GPSM2 during anaphase. Interacts (via C-terminus) with the nuclear importin alpha/importin beta receptor; this interaction is inhibited by RanGTP. Interacts (via C-terminus) with KPNB1; this interaction is inhibited by RanGTP and the BRISC complex. Interacts with ABRAXAS2 and the BRISC complex; these interactions regulate mitotic spindle assembly. Interacts (via N-terminal end of the coiled-coil domain) with RAE1; this interaction promotes mitotic spindle formation. Interacts (via C-terminus) with SPAG5 (via C-terminus); this interaction promotes the recruitment of SPAG5 to the MTs at spindle poles in a dynein-dynactin-dependent manner and regulates mitotic spindle organization and proper chromosome alignment during mitosis. Interacts with TNKS; this interaction occurs at the onset of mitosis. Interacts with TNKS2. Interacts with tubulin. Interacts with KHDC3 (via C-terminus). Post-translationally, phosphorylation and dephosphorylation on Thr-2037 regulates the extent of cortical NUMA1 and the dynein-dynactin complex localization during mitotic metaphase and anaphase. In metaphase, phosphorylation on Thr-2037 occurs in a kinase CDK1-dependent manner; this phosphorylation maintains low levels of cortical dynein-dynactin complex at metaphase, and hence proper spindle positioning. In anaphase, dephosphorylated on Thr-2037 by phosphatase PPP2CA; this dephosphorylation stimulates its membrane association and with the dynein-dynactin complex its enrichment at the cell cortex, and hence robust spindle elongation. Probably also phosphorylated on Thr-1997 and Ser-2069 by CDK1; these phosphorylations may regulate its cell cortex recruitment during metaphase and anaphase. Phosphorylated on Ser-1751, Ser-1754, Ser-1771 and Ser-1816 by PLK1; these phosphorylations induce cortical dynein-dynactin complex dissociation from the NUMA1-GPSM2 complex and negatively regulates cortical dynein-dynactin complex localization. ADP-ribosylated by TNKS at the onset of mitosis; ADP-ribosylation is not required for its localization to spindle poles. In terms of processing, O-glycosylated during cytokinesis at sites identical or close to phosphorylation sites, this interferes with the phosphorylation status. Post-translationally, ubiquitinated with 'Lys-63'-linked polyubiquitin chains. Deubiquitination by the BRISC complex is important for the incorporation of NUMA1 into mitotic spindle poles and normal spindle pole function, probably by modulating interactions between NUMA1, dynein-dynactin complex and importin-beta. As to expression, expressed in testis, speen, liver, lung, spinal cord and brain. Expressed in Purkinje neurons (at protein level).

It localises to the nucleus. The protein resides in the nucleoplasm. Its subcellular location is the nucleus matrix. It is found in the chromosome. The protein localises to the cytoplasm. It localises to the cytoskeleton. The protein resides in the microtubule organizing center. Its subcellular location is the centrosome. It is found in the spindle pole. The protein localises to the cell cortex. It localises to the cell membrane. The protein resides in the lateral cell membrane. Functionally, microtubule (MT)-binding protein that plays a role in the formation and maintenance of the spindle poles and the alignement and the segregation of chromosomes during mitotic cell division. Functions to tether the minus ends of MTs at the spindle poles, which is critical for the establishment and maintenance of the spindle poles. Plays a role in the establishment of the mitotic spindle orientation during metaphase and elongation during anaphase in a dynein-dynactin-dependent manner. In metaphase, part of a ternary complex composed of GPSM2 and G(i) alpha proteins, that regulates the recruitment and anchorage of the dynein-dynactin complex in the mitotic cell cortex regions situated above the two spindle poles, and hence regulates the correct oritentation of the mitotic spindle. During anaphase, mediates the recruitment and accumulation of the dynein-dynactin complex at the cell membrane of the polar cortical region through direct association with phosphatidylinositol 4,5-bisphosphate (PI(4,5)P2), and hence participates in the regulation of the spindle elongation and chromosome segregation. Also binds to other polyanionic phosphoinositides, such as phosphatidylinositol 3-phosphate (PIP), lysophosphatidic acid (LPA) and phosphatidylinositol triphosphate (PIP3), in vitro. Also required for proper orientation of the mitotic spindle during asymmetric cell divisions. Plays a role in mitotic MT aster assembly. Involved in anastral spindle assembly. Positively regulates TNKS protein localization to spindle poles in mitosis. Highly abundant component of the nuclear matrix where it may serve a non-mitotic structural role, occupies the majority of the nuclear volume. Required for epidermal differentiation and hair follicle morphogenesis. This chain is Nuclear mitotic apparatus protein 1, found in Mus musculus (Mouse).